Here is a 225-residue protein sequence, read N- to C-terminus: Nucleolar protein 6 (225 aa).

Residues 1 to 75 are disordered; the sequence is MGSEEDKKLT…GGKGKNGKKG (75 aa). A compositionally biased stretch (basic residues) spans 9–20; it reads LTKKQLKAQQFR. The segment covering 21–42 has biased composition (basic and acidic residues); sequence KSKEEKDQEKDVKKEQAPEGKR. The residue at position 45 (serine 45) is a Phosphoserine. The segment covering 56-75 has biased composition (basic residues); the sequence is KKKRKTRRGRGGKGKNGKKG. The region spanning 78–155 is the RRM domain; the sequence is FIVFVGSLPR…KKINVELTVG (78 aa). Phosphoserine is present on serine 160. The disordered stretch occupies residues 187–225; it reads NDGNQKKIAKTTATAAQTSGTDNKPVPAGIHPDRAKLLK.

This sequence belongs to the RRM NOP6 family.

It localises to the nucleus. The protein resides in the nucleolus. Functionally, predicted to be involved in rRNA processing. The chain is Nucleolar protein 6 (NOP6) from Saccharomyces cerevisiae (strain ATCC 204508 / S288c) (Baker's yeast).